The following is a 232-amino-acid chain: Large ribosomal subunit protein uL1 (232 aa).

It belongs to the universal ribosomal protein uL1 family. Part of the 50S ribosomal subunit.

Its function is as follows. Binds directly to 23S rRNA. The L1 stalk is quite mobile in the ribosome, and is involved in E site tRNA release. Functionally, protein L1 is also a translational repressor protein, it controls the translation of the L11 operon by binding to its mRNA. In Mesorhizobium japonicum (strain LMG 29417 / CECT 9101 / MAFF 303099) (Mesorhizobium loti (strain MAFF 303099)), this protein is Large ribosomal subunit protein uL1.